The following is an 84-amino-acid chain: Small ribosomal subunit protein uS17 (84 aa).

This sequence belongs to the universal ribosomal protein uS17 family. Part of the 30S ribosomal subunit.

In terms of biological role, one of the primary rRNA binding proteins, it binds specifically to the 5'-end of 16S ribosomal RNA. In Actinobacillus pleuropneumoniae serotype 5b (strain L20), this protein is Small ribosomal subunit protein uS17.